We begin with the raw amino-acid sequence, 296 residues long: Phosphatidylserine decarboxylase proenzyme (296 aa).

Residues Asp-100, His-157, and Ser-263 each act as charge relay system; for autoendoproteolytic cleavage activity in the active site. Catalysis depends on Ser-263, which acts as the Schiff-base intermediate with substrate; via pyruvic acid; for decarboxylase activity. Ser-263 is modified (pyruvic acid (Ser); by autocatalysis).

It belongs to the phosphatidylserine decarboxylase family. PSD-B subfamily. Prokaryotic type I sub-subfamily. Heterodimer of a large membrane-associated beta subunit and a small pyruvoyl-containing alpha subunit. Requires pyruvate as cofactor. In terms of processing, is synthesized initially as an inactive proenzyme. Formation of the active enzyme involves a self-maturation process in which the active site pyruvoyl group is generated from an internal serine residue via an autocatalytic post-translational modification. Two non-identical subunits are generated from the proenzyme in this reaction, and the pyruvate is formed at the N-terminus of the alpha chain, which is derived from the carboxyl end of the proenzyme. The autoendoproteolytic cleavage occurs by a canonical serine protease mechanism, in which the side chain hydroxyl group of the serine supplies its oxygen atom to form the C-terminus of the beta chain, while the remainder of the serine residue undergoes an oxidative deamination to produce ammonia and the pyruvoyl prosthetic group on the alpha chain. During this reaction, the Ser that is part of the protease active site of the proenzyme becomes the pyruvoyl prosthetic group, which constitutes an essential element of the active site of the mature decarboxylase.

Its subcellular location is the cell membrane. The enzyme catalyses a 1,2-diacyl-sn-glycero-3-phospho-L-serine + H(+) = a 1,2-diacyl-sn-glycero-3-phosphoethanolamine + CO2. It participates in phospholipid metabolism; phosphatidylethanolamine biosynthesis; phosphatidylethanolamine from CDP-diacylglycerol: step 2/2. Its function is as follows. Catalyzes the formation of phosphatidylethanolamine (PtdEtn) from phosphatidylserine (PtdSer). In Actinobacillus pleuropneumoniae serotype 7 (strain AP76), this protein is Phosphatidylserine decarboxylase proenzyme.